We begin with the raw amino-acid sequence, 689 residues long: Glycine--tRNA ligase beta subunit (689 aa).

It belongs to the class-II aminoacyl-tRNA synthetase family. In terms of assembly, tetramer of two alpha and two beta subunits.

Its subcellular location is the cytoplasm. It carries out the reaction tRNA(Gly) + glycine + ATP = glycyl-tRNA(Gly) + AMP + diphosphate. The polypeptide is Glycine--tRNA ligase beta subunit (Shewanella baltica (strain OS223)).